A 200-amino-acid chain; its full sequence is 3-isopropylmalate dehydratase small subunit (200 aa).

The protein belongs to the LeuD family. LeuD type 1 subfamily. Heterodimer of LeuC and LeuD.

The enzyme catalyses (2R,3S)-3-isopropylmalate = (2S)-2-isopropylmalate. It participates in amino-acid biosynthesis; L-leucine biosynthesis; L-leucine from 3-methyl-2-oxobutanoate: step 2/4. Functionally, catalyzes the isomerization between 2-isopropylmalate and 3-isopropylmalate, via the formation of 2-isopropylmaleate. This is 3-isopropylmalate dehydratase small subunit from Edwardsiella ictaluri (strain 93-146).